The primary structure comprises 222 residues: MKNNSQLLMPREKMLKFGISALTDVELLALFLRTGTRGKDVLTLAKEMLENFGSLYGLLTSEYEQFSGVHGIGVAKFAQLKGIAELARRYYNVRMREESPLLSPEMTREFLQSQLTGEEREIFMVIFLDSQHRVITHSRLFSGTLNHVEVHPREIIREAIKINASALILAHNHPSGCAEPSKADKLITERIIKSCQFMDLRVLDHIVIGRGEYVSFAERGWI.

The region spanning 100 to 222 (PLLSPEMTRE…YVSFAERGWI (123 aa)) is the MPN domain. Zn(2+) contacts are provided by His171, His173, and Asp184. The short motif at 171 to 184 (HNHPSGCAEPSKAD) is the JAMM motif element.

It belongs to the UPF0758 family. YicR subfamily.

This Escherichia coli (strain 55989 / EAEC) protein is UPF0758 protein YicR.